The sequence spans 408 residues: Serine/threonine transporter SstT (408 aa).

9 helical membrane-spanning segments follow: residues 11–31, 43–63, 82–102, 141–161, 192–212, 216–236, 290–310, 316–336, and 363–383; these read LANG…VALA, FLGS…VFIL, IVVL…ILSM, ALMT…GLAL, IGIF…AIAG, LLAV…PLIV, IPLG…VLTL, LGIQ…AISA, and VAMQ…AAET.

This sequence belongs to the dicarboxylate/amino acid:cation symporter (DAACS) (TC 2.A.23) family.

The protein localises to the cell inner membrane. The enzyme catalyses L-serine(in) + Na(+)(in) = L-serine(out) + Na(+)(out). The catalysed reaction is L-threonine(in) + Na(+)(in) = L-threonine(out) + Na(+)(out). Functionally, involved in the import of serine and threonine into the cell, with the concomitant import of sodium (symport system). In Shewanella oneidensis (strain ATCC 700550 / JCM 31522 / CIP 106686 / LMG 19005 / NCIMB 14063 / MR-1), this protein is Serine/threonine transporter SstT.